Here is a 291-residue protein sequence, read N- to C-terminus: Alpha-soluble NSF attachment protein (291 aa).

TPR repeat units lie at residues 14–51, 77–110, 117–150, and 157–190; these read ADKR…FKMS, AASS…YTDE, AKHQ…FDGE, and HQCL…SLDN.

It belongs to the SNAP family. In terms of assembly, interacts with nsfA and probably SNARE proteins.

Its subcellular location is the cytoplasmic vesicle membrane. May be required for vesicular transport between the endoplasmic reticulum and the Golgi apparatus. Involved in vesicle fusion with nsfA and probably SNARE proteins. The protein is Alpha-soluble NSF attachment protein (snpA) of Dictyostelium discoideum (Social amoeba).